Here is a 265-residue protein sequence, read N- to C-terminus: Shikimate dehydrogenase (NADP(+)) (265 aa).

Shikimate is bound by residues 15-17 (SLS) and Thr62. Lys66 acts as the Proton acceptor in catalysis. 2 residues coordinate shikimate: Asn87 and Asp102. NADP(+)-binding positions include 125–129 (GAGGA), 149–154 (NRTLEK), and Leu209. Tyr211 lines the shikimate pocket. Gly233 provides a ligand contact to NADP(+).

This sequence belongs to the shikimate dehydrogenase family. In terms of assembly, homodimer.

The enzyme catalyses shikimate + NADP(+) = 3-dehydroshikimate + NADPH + H(+). The protein operates within metabolic intermediate biosynthesis; chorismate biosynthesis; chorismate from D-erythrose 4-phosphate and phosphoenolpyruvate: step 4/7. In terms of biological role, involved in the biosynthesis of the chorismate, which leads to the biosynthesis of aromatic amino acids. Catalyzes the reversible NADPH linked reduction of 3-dehydroshikimate (DHSA) to yield shikimate (SA). This chain is Shikimate dehydrogenase (NADP(+)), found in Legionella pneumophila subsp. pneumophila (strain Philadelphia 1 / ATCC 33152 / DSM 7513).